The following is a 388-amino-acid chain: G2/mitotic-specific cyclin-B2 (388 aa).

Residues 46 to 67 (ATNGKVGPSKKPSKASCVQKPK) are disordered.

The protein belongs to the cyclin family. Cyclin AB subfamily. As to quaternary structure, interacts with the CDK1 protein kinase to form a serine/threonine kinase holoenzyme complex also known as maturation promoting factor (MPF). The cyclin subunit imparts substrate specificity to the complex.

Essential for the control of the cell cycle at the G2/M (mitosis) transition. This chain is G2/mitotic-specific cyclin-B2 (ccnb2), found in Oryzias curvinotus (Hynann ricefish).